The chain runs to 335 residues: Methionine import ATP-binding protein MetN (335 aa).

Positions 2-241 (IQFKDSYKHY…PQHPTTRSFV (240 aa)) constitute an ABC transporter domain. 38 to 45 (GHSGAGKS) lines the ATP pocket.

This sequence belongs to the ABC transporter superfamily. Methionine importer (TC 3.A.1.24) family. The complex is composed of two ATP-binding proteins (MetN), two transmembrane proteins (MetI) and a solute-binding protein (MetQ).

It localises to the cell inner membrane. The enzyme catalyses L-methionine(out) + ATP + H2O = L-methionine(in) + ADP + phosphate + H(+). It carries out the reaction D-methionine(out) + ATP + H2O = D-methionine(in) + ADP + phosphate + H(+). Functionally, part of the ABC transporter complex MetNIQ involved in methionine import. Responsible for energy coupling to the transport system. The polypeptide is Methionine import ATP-binding protein MetN (Xylella fastidiosa (strain Temecula1 / ATCC 700964)).